The chain runs to 342 residues: Cystein proteinase inhibitor protein salarin (342 aa).

Positions 1 to 19 (MKSLVLLLLVAVTVSSVVS) are cleaved as a signal peptide. N-linked (GlcNAc) asparagine glycosylation is present at asparagine 153. Threonine 184 carries an O-linked (GlcNAc) threonine glycan.

Post-translationally, N-glycosylated, with sialylated biantennary complex-type glycans. In terms of processing, O-glycosylated, with sialylated oligosaccharides. In terms of tissue distribution, expressed in the skin, liver. intestine, spleen, pancreas and kidney.

Its subcellular location is the cytoplasm. It localises to the vacuole. In terms of biological role, inhibits papain and ficin (cysteine proteinases) but not trypsin (a serine proteinase). This Salmo salar (Atlantic salmon) protein is Cystein proteinase inhibitor protein salarin (salarin).